The chain runs to 269 residues: Undecaprenyl-diphosphatase (269 aa).

8 consecutive transmembrane segments (helical) span residues 1-21, 40-59, 87-107, 117-137, 147-166, 188-208, 220-240, and 248-268; these read MDIMHAAVLGILQGLTEILPI, GLTFDVGLHVGTLIALCVYF, FFIIAGTVPAAIAGKTLEKPI, LIALLLIAFGLLLALADTTGP, LRGALLIGLAQCLALIPGVS, FSFLLSLPIVAGAGILKMGEL, PLLAGMATSAVSGYLGVALLL, and LYPFVWYRLLAGGAVLAYLFA.

It belongs to the UppP family.

Its subcellular location is the cell inner membrane. It carries out the reaction di-trans,octa-cis-undecaprenyl diphosphate + H2O = di-trans,octa-cis-undecaprenyl phosphate + phosphate + H(+). Functionally, catalyzes the dephosphorylation of undecaprenyl diphosphate (UPP). Confers resistance to bacitracin. The sequence is that of Undecaprenyl-diphosphatase from Geobacter sulfurreducens (strain ATCC 51573 / DSM 12127 / PCA).